A 379-amino-acid polypeptide reads, in one-letter code: Carbamoyl phosphate synthase small chain (379 aa).

The CPSase stretch occupies residues 1–184 (MVSLYLENGL…LDYKPFDEKN (184 aa)). 3 residues coordinate L-glutamine: serine 44, glycine 240, and glycine 242. One can recognise a Glutamine amidotransferase type-1 domain in the interval 188–378 (TIAVLDFGAK…VKLLENFPTR (191 aa)). The active-site Nucleophile is cysteine 268. Leucine 269, glutamine 272, asparagine 310, and tyrosine 313 together coordinate L-glutamine. Active-site residues include histidine 351 and glutamate 353.

It belongs to the CarA family. In terms of assembly, composed of two chains; the small (or glutamine) chain promotes the hydrolysis of glutamine to ammonia, which is used by the large (or ammonia) chain to synthesize carbamoyl phosphate. Tetramer of heterodimers (alpha,beta)4.

The enzyme catalyses hydrogencarbonate + L-glutamine + 2 ATP + H2O = carbamoyl phosphate + L-glutamate + 2 ADP + phosphate + 2 H(+). The catalysed reaction is L-glutamine + H2O = L-glutamate + NH4(+). Its pathway is amino-acid biosynthesis; L-arginine biosynthesis; carbamoyl phosphate from bicarbonate: step 1/1. The protein operates within pyrimidine metabolism; UMP biosynthesis via de novo pathway; (S)-dihydroorotate from bicarbonate: step 1/3. Small subunit of the glutamine-dependent carbamoyl phosphate synthetase (CPSase). CPSase catalyzes the formation of carbamoyl phosphate from the ammonia moiety of glutamine, carbonate, and phosphate donated by ATP, constituting the first step of 2 biosynthetic pathways, one leading to arginine and/or urea and the other to pyrimidine nucleotides. The small subunit (glutamine amidotransferase) binds and cleaves glutamine to supply the large subunit with the substrate ammonia. In Helicobacter acinonychis (strain Sheeba), this protein is Carbamoyl phosphate synthase small chain.